The chain runs to 356 residues: sn-glycerol-3-phosphate import ATP-binding protein UgpC (356 aa).

The region spanning 4–235 (LKLQAVTKSW…PASRFVASFI (232 aa)) is the ABC transporter domain. 37 to 44 (GPSGCGKS) contacts ATP.

This sequence belongs to the ABC transporter superfamily. sn-glycerol-3-phosphate importer (TC 3.A.1.1.3) family. In terms of assembly, the complex is composed of two ATP-binding proteins (UgpC), two transmembrane proteins (UgpA and UgpE) and a solute-binding protein (UgpB).

The protein resides in the cell inner membrane. The catalysed reaction is sn-glycerol 3-phosphate(out) + ATP + H2O = sn-glycerol 3-phosphate(in) + ADP + phosphate + H(+). Its function is as follows. Part of the ABC transporter complex UgpBAEC involved in sn-glycerol-3-phosphate (G3P) import. Responsible for energy coupling to the transport system. The sequence is that of sn-glycerol-3-phosphate import ATP-binding protein UgpC from Salmonella typhi.